Here is a 96-residue protein sequence, read N- to C-terminus: Neutrophil defensin 3 (96 aa).

An N-terminal signal peptide occupies residues 1 to 19; sequence MRTLVILAAILLVALQAQA. A propeptide spanning residues 20-66 is cleaved from the precursor; the sequence is EPLQARTDEATAAQEQIPTDNPEVVVSLAWDESLAPKDSVPGLRKNM. Disulfide bonds link C68/C96, C70/C85, and C75/C95.

The protein localises to the secreted. Its function is as follows. Has bacteriostatic activity against Gram-positive bacteria S.aureus and L.monocytogenes and Gram-negative bacterium E.coli and antifungal activity against C.neoformans. The chain is Neutrophil defensin 3 from Macaca mulatta (Rhesus macaque).